A 370-amino-acid chain; its full sequence is tRNA-specific 2-thiouridylase MnmA (370 aa).

ATP contacts are provided by residues 12–19 and M38; that span reads GLSGGVDS. The tract at residues 98-100 is interaction with target base in tRNA; that stretch reads NPD. Residue C103 is the Nucleophile of the active site. Residues C103 and C201 are joined by a disulfide bond. Position 127 (G127) interacts with ATP. The tract at residues 151–153 is interaction with tRNA; it reads KDQ. C201 functions as the Cysteine persulfide intermediate in the catalytic mechanism. The tract at residues 319–320 is interaction with tRNA; the sequence is RY.

It belongs to the MnmA/TRMU family.

It is found in the cytoplasm. It catalyses the reaction S-sulfanyl-L-cysteinyl-[protein] + uridine(34) in tRNA + AH2 + ATP = 2-thiouridine(34) in tRNA + L-cysteinyl-[protein] + A + AMP + diphosphate + H(+). Catalyzes the 2-thiolation of uridine at the wobble position (U34) of tRNA, leading to the formation of s(2)U34. The polypeptide is tRNA-specific 2-thiouridylase MnmA (Verminephrobacter eiseniae (strain EF01-2)).